The following is a 177-amino-acid chain: ATP synthase subunit b (177 aa).

The chain crosses the membrane as a helical span at residues 29–49 (FFFVLAIFLIVLAVIGTFVVP).

The protein belongs to the ATPase B chain family. In terms of assembly, F-type ATPases have 2 components, F(1) - the catalytic core - and F(0) - the membrane proton channel. F(1) has five subunits: alpha(3), beta(3), gamma(1), delta(1), epsilon(1). F(0) has three main subunits: a(1), b(2) and c(10-14). The alpha and beta chains form an alternating ring which encloses part of the gamma chain. F(1) is attached to F(0) by a central stalk formed by the gamma and epsilon chains, while a peripheral stalk is formed by the delta and b chains.

It localises to the cell membrane. Its function is as follows. F(1)F(0) ATP synthase produces ATP from ADP in the presence of a proton or sodium gradient. F-type ATPases consist of two structural domains, F(1) containing the extramembraneous catalytic core and F(0) containing the membrane proton channel, linked together by a central stalk and a peripheral stalk. During catalysis, ATP synthesis in the catalytic domain of F(1) is coupled via a rotary mechanism of the central stalk subunits to proton translocation. In terms of biological role, component of the F(0) channel, it forms part of the peripheral stalk, linking F(1) to F(0). The chain is ATP synthase subunit b from Mycolicibacterium paratuberculosis (strain ATCC BAA-968 / K-10) (Mycobacterium paratuberculosis).